Reading from the N-terminus, the 556-residue chain is Oxygen-dependent choline dehydrogenase (556 aa).

4 to 33 (DYIIIGAGSAGNVLATRLTEDPNTTVLLLE) serves as a coordination point for FAD. His473 acts as the Proton acceptor in catalysis.

The protein belongs to the GMC oxidoreductase family. FAD is required as a cofactor.

It catalyses the reaction choline + A = betaine aldehyde + AH2. The catalysed reaction is betaine aldehyde + NAD(+) + H2O = glycine betaine + NADH + 2 H(+). It functions in the pathway amine and polyamine biosynthesis; betaine biosynthesis via choline pathway; betaine aldehyde from choline (cytochrome c reductase route): step 1/1. Involved in the biosynthesis of the osmoprotectant glycine betaine. Catalyzes the oxidation of choline to betaine aldehyde and betaine aldehyde to glycine betaine at the same rate. The sequence is that of Oxygen-dependent choline dehydrogenase from Escherichia coli O6:K15:H31 (strain 536 / UPEC).